Reading from the N-terminus, the 124-residue chain is UPF0299 membrane protein VP1300 (124 aa).

The next 4 helical transmembrane spans lie at 9 to 29 (LIQL…GITI), 35 to 55 (VSVP…TLGL), 72 to 92 (MILL…MLLA), and 95 to 115 (LPII…LAWL).

The protein belongs to the UPF0299 family.

Its subcellular location is the cell inner membrane. The sequence is that of UPF0299 membrane protein VP1300 from Vibrio parahaemolyticus serotype O3:K6 (strain RIMD 2210633).